A 632-amino-acid chain; its full sequence is MQDDLLMDKSKAQQRQQPQQPPSSQTQQQQKEAASVAEPPSSRESSPPTHKDKMQMESPLLPGLSFQQEPPTTPSLSPSFGSTWSTGGSNSAVDDSFFPGITPVNGTMLFQNFPHHHHVNPVFGGTFSPQMGLAHQTQQQQRRSPASPNNHTAYTQRNAYSHQPILTNKPSSSPNSSSPSPSNWNNQQNAAWNTPSNPWGAMQPGRDPRRAVGVGVGVGVGVPSPLNPISPLKKTFSSNVIAPPKFSRASPLTPKSWVEDNAFRTDNGNTLLPLQDRNRPYDSFNLHTLENSLMDMIRTDHEPLKARMGLNFHHPGTDNIMALNTRSYGRRRGRSSLFPFEDGFLGDGHGDQSLSSGLSSPTHCQNGERIERYSRKVFVGGLPPDIDEDEITASFRRFGPLVVDWPHKAESKSYFPPKGYAFLLFQEESSVQALIDACLEEDGKLYLCVSSPTIKDKPVQIRPWNLSDSDFVMDGSQPLDPRKTIFVGGVPRPLRAVELAMIMDRLYGGVCYAGIDTDPELKYPKGAGRVAFSNQQSYIAAISARFVQLQHNDIDKRVEVKPYVLDDQMCDECQGTRCGGKFAPFFCANVTCLQYYCEYCWASIHSRAGREFHKPLVKEGGDRPRHVPFHWS.

The span at 1–11 shows a compositional bias: basic and acidic residues; it reads MQDDLLMDKSK. 2 disordered regions span residues 1-89 and 127-212; these read MQDD…TGGS and FSPQ…RRAV. The span at 13–48 shows a compositional bias: low complexity; it reads QQRQQPQQPPSSQTQQQQKEAASVAEPPSSRESSPP. Polar residues-rich tracts occupy residues 65–89 and 135–169; these read SFQQ…TGGS and HQTQ…LTNK. Low complexity predominate over residues 170–193; the sequence is PSSSPNSSSPSPSNWNNQQNAAWN. RRM domains follow at residues 375-466 and 483-565; these read RKVF…PWNL and KTIF…PYVL.

It belongs to the RRM CPEB family. As to quaternary structure, following synaptic activity, forms amyloid-like oligomers. Aggregation requires an intact actin cytoskeleton. In embryos, expressed in the central nervous system, and intermediate and distal pronephric tubule segments of the embryonic kidney.

It is found in the cytoplasm. The protein resides in the nucleus. Its subcellular location is the synapse. It localises to the cell projection. The protein localises to the dendrite. It is found in the postsynaptic density. Its function is as follows. Sequence-specific RNA-binding protein which acts as a translational repressor in the basal unstimulated state but, following neuronal stimulation, acts as a translational activator. Does not bind to the cytoplasmic polyadenylation element (CPE), a uridine-rich sequence element within the mRNA 3'-UTR, but binds to a U-rich loop within a stem-loop structure. Required for the consolidation and maintenance of hippocampal-based long term memory. Inhibits differentiation of intermediate mesoderm from an early stage to inhibit pronephric differentiation but induce neural differentiation. This is Cytoplasmic polyadenylation element-binding protein 3 (cpeb3) from Xenopus tropicalis (Western clawed frog).